The chain runs to 435 residues: Glutamyl-tRNA reductase (435 aa).

Substrate contacts are provided by residues 49–52, serine 109, 114–116, and glutamine 120; these read TCNR and ETQ. Cysteine 50 (nucleophile) is an active-site residue. 189 to 194 contacts NADP(+); the sequence is GAGEMS.

It belongs to the glutamyl-tRNA reductase family. As to quaternary structure, homodimer.

It catalyses the reaction (S)-4-amino-5-oxopentanoate + tRNA(Glu) + NADP(+) = L-glutamyl-tRNA(Glu) + NADPH + H(+). Its pathway is porphyrin-containing compound metabolism; protoporphyrin-IX biosynthesis; 5-aminolevulinate from L-glutamyl-tRNA(Glu): step 1/2. Its function is as follows. Catalyzes the NADPH-dependent reduction of glutamyl-tRNA(Glu) to glutamate 1-semialdehyde (GSA). In Listeria monocytogenes serotype 4b (strain CLIP80459), this protein is Glutamyl-tRNA reductase.